The primary structure comprises 208 residues: 3-demethoxyubiquinol 3-hydroxylase (208 aa).

Residues glutamate 57, glutamate 87, histidine 90, glutamate 139, glutamate 171, and histidine 174 each contribute to the Fe cation site.

It belongs to the COQ7 family. Fe cation is required as a cofactor.

It localises to the cell membrane. It carries out the reaction a 5-methoxy-2-methyl-3-(all-trans-polyprenyl)benzene-1,4-diol + AH2 + O2 = a 3-demethylubiquinol + A + H2O. Its pathway is cofactor biosynthesis; ubiquinone biosynthesis. Functionally, catalyzes the hydroxylation of 2-nonaprenyl-3-methyl-6-methoxy-1,4-benzoquinol during ubiquinone biosynthesis. The polypeptide is 3-demethoxyubiquinol 3-hydroxylase (Burkholderia ambifaria (strain MC40-6)).